Consider the following 127-residue polypeptide: Large ribosomal subunit protein bL17 (127 aa).

This sequence belongs to the bacterial ribosomal protein bL17 family. In terms of assembly, part of the 50S ribosomal subunit. Contacts protein L32.

The protein is Large ribosomal subunit protein bL17 of Xanthomonas oryzae pv. oryzae (strain KACC10331 / KXO85).